The sequence spans 272 residues: Methylsterol monooxygenase 2-1 (272 aa).

A run of 3 helical transmembrane segments spans residues Ile24–Leu44, Leu72–Met94, and Val107–His127. The 147-residue stretch at Leu113 to Thr259 folds into the Fatty acid hydroxylase domain. The short motif at His127–His131 is the Histidine box-1 element. The Histidine box-2 signature appears at His140–His144. Transmembrane regions (helical) follow at residues Ile162–Thr182 and Asn209–Ala229. A Histidine box-3 motif is present at residues Phe231 to Arg237.

It belongs to the sterol desaturase family. Fe cation serves as cofactor. Strongly expressed in leaves, flowers, siliques and developing seeds.

The protein localises to the endoplasmic reticulum membrane. It carries out the reaction 4,4-dimethyl-5alpha-cholest-7-en-3beta-ol + 6 Fe(II)-[cytochrome b5] + 3 O2 + 5 H(+) = 4alpha-carboxy-4beta-methyl-5alpha-cholest-7-ene-3beta-ol + 6 Fe(III)-[cytochrome b5] + 4 H2O. The enzyme catalyses 24-methylidenelophenol + 6 Fe(II)-[cytochrome b5] + 3 O2 + 5 H(+) = 4alpha-carboxy-ergosta-7,24(24(1))-dien-3beta-ol + 6 Fe(III)-[cytochrome b5] + 4 H2O. Its function is as follows. Non-heme iron oxygenase involved in sterols biosynthesis by catalyzing the removal of the second methyl group at the C-4 position. 24-ethylidenelophenol and 24-ethyllophenol are the preferred substrates. Together with SMO2-2, required during embryogenesis, probably by maintaining sterols and auxin homeostasis. This Arabidopsis thaliana (Mouse-ear cress) protein is Methylsterol monooxygenase 2-1.